Here is a 180-residue protein sequence, read N- to C-terminus: NAD(P)H-quinone oxidoreductase subunit I, chloroplastic (180 aa).

4Fe-4S ferredoxin-type domains follow at residues 55 to 84 and 95 to 124; these read GRIHFEFDKCIACEVCVRVCPIDLPVVDWR and LNYSIDFGICIFCGNCVEYCPTNCLSMTEE. Cys-64, Cys-67, Cys-70, Cys-74, Cys-104, Cys-107, Cys-110, and Cys-114 together coordinate [4Fe-4S] cluster.

Belongs to the complex I 23 kDa subunit family. In terms of assembly, NDH is composed of at least 16 different subunits, 5 of which are encoded in the nucleus. The cofactor is [4Fe-4S] cluster.

It is found in the plastid. It localises to the chloroplast thylakoid membrane. It carries out the reaction a plastoquinone + NADH + (n+1) H(+)(in) = a plastoquinol + NAD(+) + n H(+)(out). The enzyme catalyses a plastoquinone + NADPH + (n+1) H(+)(in) = a plastoquinol + NADP(+) + n H(+)(out). Functionally, NDH shuttles electrons from NAD(P)H:plastoquinone, via FMN and iron-sulfur (Fe-S) centers, to quinones in the photosynthetic chain and possibly in a chloroplast respiratory chain. The immediate electron acceptor for the enzyme in this species is believed to be plastoquinone. Couples the redox reaction to proton translocation, and thus conserves the redox energy in a proton gradient. The sequence is that of NAD(P)H-quinone oxidoreductase subunit I, chloroplastic from Drimys granadensis.